Here is a 438-residue protein sequence, read N- to C-terminus: sn-glycerol-3-phosphate-binding periplasmic protein UgpB (438 aa).

The first 23 residues, 1–23 (MKPLHYTASALALGLALMGNAQA), serve as a signal peptide directing secretion. Sn-glycerol 3-phosphate is bound by residues Tyr-65, Glu-89, Ser-144, Ser-270, Gly-307, Tyr-346, and Arg-397.

It belongs to the bacterial solute-binding protein 1 family. As to quaternary structure, the complex is composed of two ATP-binding proteins (UgpC), two transmembrane proteins (UgpA and UgpE) and a solute-binding protein (UgpB).

Its subcellular location is the periplasm. Functionally, part of the ABC transporter complex UgpBAEC involved in sn-glycerol-3-phosphate (G3P) import. Binds G3P. The polypeptide is sn-glycerol-3-phosphate-binding periplasmic protein UgpB (ugpB) (Shigella flexneri serotype 5b (strain 8401)).